Here is a 515-residue protein sequence, read N- to C-terminus: Glucose-6-phosphate 1-dehydrogenase (515 aa).

Ala2 carries the N-acetylalanine modification. At Ser8 the chain carries Phosphoserine. Residue Thr10 is modified to Phosphothreonine. Residues 38 to 45 and Arg72 each bind NADP(+); that span reads GASGDLAK. Lys89 is modified (N6-acetyllysine). NADP(+) contacts are provided by Tyr147 and Lys171. Residues Lys171, 201–205, Glu239, and Asp258 contribute to the D-glucose 6-phosphate site; that span reads HYLGK. At Lys171 the chain carries N6-(2-hydroxyisobutyryl)lysine; alternate. Position 171 is an N6-acetyllysine; alternate (Lys171). His263 (proton acceptor) is an active-site residue. NADP(+) is bound at residue Arg357. Residues Lys360 and Arg365 each coordinate D-glucose 6-phosphate. NADP(+) is bound by residues Lys366, Arg370, and Arg393. Gln395 serves as a coordination point for D-glucose 6-phosphate. Residues 401–403 and 421–423 contribute to the NADP(+) site; these read YTK and DLT. Lys403 is modified (N6-acetyllysine). The residue at position 432 (Lys432) is an N6-acetyllysine. Arg487 is an NADP(+) binding site. The residue at position 497 (Lys497) is an N6-acetyllysine. NADP(+)-binding residues include Tyr503 and Trp509. Residue Tyr503 is modified to Phosphotyrosine.

It belongs to the glucose-6-phosphate dehydrogenase family. As to quaternary structure, homotetramer; dimer of dimers. Interacts with SIRT2; the interaction is enhanced by H(2)O(2) treatment. Forms a ternary complex with ALDOB and TP53; this interaction is direct. ALDOB stabilizes the complex inhibiting G6PD activity and keeping oxidative pentose phosphate metabolism in check. Acetylated by ELP3 at Lys-403; acetylation inhibits its homodimerization and enzyme activity. Deacetylated by SIRT2 at Lys-403; deacetylation stimulates its enzyme activity.

It localises to the cytoplasm. The protein localises to the cytosol. The protein resides in the membrane. It carries out the reaction D-glucose 6-phosphate + NADP(+) = 6-phospho-D-glucono-1,5-lactone + NADPH + H(+). The protein operates within carbohydrate degradation; pentose phosphate pathway; D-ribulose 5-phosphate from D-glucose 6-phosphate (oxidative stage): step 1/3. In terms of biological role, cytosolic glucose-6-phosphate dehydrogenase that catalyzes the first and rate-limiting step of the oxidative branch within the pentose phosphate pathway/shunt, an alternative route to glycolysis for the dissimilation of carbohydrates and a major source of reducing power and metabolic intermediates for fatty acid and nucleic acid biosynthetic processes. This chain is Glucose-6-phosphate 1-dehydrogenase (G6PD), found in Osphranter robustus (Wallaroo).